A 501-amino-acid chain; its full sequence is Lysine--tRNA ligase (501 aa).

Mg(2+)-binding residues include Glu411 and Glu418.

This sequence belongs to the class-II aminoacyl-tRNA synthetase family. Homodimer. Requires Mg(2+) as cofactor.

It is found in the cytoplasm. The enzyme catalyses tRNA(Lys) + L-lysine + ATP = L-lysyl-tRNA(Lys) + AMP + diphosphate. This is Lysine--tRNA ligase from Pseudomonas aeruginosa (strain UCBPP-PA14).